A 480-amino-acid polypeptide reads, in one-letter code: Phenylalanine--tRNA ligase alpha subunit (480 aa).

The L-phenylalanine site is built by Thr-324 and Phe-407. Glu-409 serves as a coordination point for Mg(2+). L-phenylalanine is bound at residue Phe-432.

The protein belongs to the class-II aminoacyl-tRNA synthetase family. Phe-tRNA synthetase alpha subunit type 2 subfamily. Tetramer of two alpha and two beta subunits. Requires Mg(2+) as cofactor.

The protein localises to the cytoplasm. It carries out the reaction tRNA(Phe) + L-phenylalanine + ATP = L-phenylalanyl-tRNA(Phe) + AMP + diphosphate + H(+). This Methanocaldococcus jannaschii (strain ATCC 43067 / DSM 2661 / JAL-1 / JCM 10045 / NBRC 100440) (Methanococcus jannaschii) protein is Phenylalanine--tRNA ligase alpha subunit.